A 253-amino-acid chain; its full sequence is uncharacterized protein (253 aa).

Serine 145 lines the substrate pocket. Tyrosine 159 (proton acceptor) is an active-site residue.

This sequence belongs to the short-chain dehydrogenases/reductases (SDR) family.

This is an uncharacterized protein from Mycobacterium tuberculosis (strain CDC 1551 / Oshkosh).